Consider the following 92-residue polypeptide: Subtilisin inhibitor 1 (92 aa).

A compositionally biased stretch (polar residues) spans 1-12 (QEQGTNPSQEQN). The tract at residues 1-31 (QEQGTNPSQEQNVPLPRNYKQALETNTPTKT) is disordered.

The protein belongs to the protease inhibitor I13 (potato type I serine protease inhibitor) family.

Functionally, inhibitor of subtilisin. In Phaseolus angularis (Azuki bean), this protein is Subtilisin inhibitor 1.